The chain runs to 130 residues: MSKPRIALIAHDAKKDEIVALAGQYRETLAQCRLVATGTTGGRIAAAHGLEVERKLSGPLGGDLQIGAELADGRVDIVVFLRDPMTAQPHDPDITALVRACDVHDVPVATNVATARMLLDDLARNMQDVC.

An MGS-like domain is found at 1–130; the sequence is MSKPRIALIA…DLARNMQDVC (130 aa). Substrate is bound by residues His-11, Lys-15, 37 to 40, and 57 to 58; these read TGTT and SG. Residue Asp-63 is the Proton donor/acceptor of the active site. Position 90 (His-90) interacts with substrate.

It belongs to the methylglyoxal synthase family.

It catalyses the reaction dihydroxyacetone phosphate = methylglyoxal + phosphate. Functionally, catalyzes the formation of methylglyoxal from dihydroxyacetone phosphate. This Burkholderia cenocepacia (strain HI2424) protein is Methylglyoxal synthase.